The sequence spans 386 residues: Outer membrane protein assembly factor BamB (386 aa).

A signal peptide spans 1-20; it reads MKKLFNQVLVAAGVLALLAG. C21 is lipidated: N-palmitoyl cysteine. C21 carries S-diacylglycerol cysteine lipidation.

It belongs to the BamB family. As to quaternary structure, part of the Bam complex.

It localises to the cell outer membrane. Functionally, part of the outer membrane protein assembly complex, which is involved in assembly and insertion of beta-barrel proteins into the outer membrane. This is Outer membrane protein assembly factor BamB from Vibrio cholerae serotype O1 (strain ATCC 39315 / El Tor Inaba N16961).